The primary structure comprises 176 residues: Ribosome maturation factor RimM (176 aa).

The region spanning 96–176 is the PRC barrel domain; that stretch reads PEDEFYWRDL…QILVDWDPDF (81 aa).

The protein belongs to the RimM family. In terms of assembly, binds ribosomal protein uS19.

Its subcellular location is the cytoplasm. Its function is as follows. An accessory protein needed during the final step in the assembly of 30S ribosomal subunit, possibly for assembly of the head region. Essential for efficient processing of 16S rRNA. May be needed both before and after RbfA during the maturation of 16S rRNA. It has affinity for free ribosomal 30S subunits but not for 70S ribosomes. This chain is Ribosome maturation factor RimM, found in Shewanella woodyi (strain ATCC 51908 / MS32).